Consider the following 301-residue polypeptide: Small ribosomal subunit protein uS2 (301 aa).

This sequence belongs to the universal ribosomal protein uS2 family.

This chain is Small ribosomal subunit protein uS2, found in Acidobacterium capsulatum (strain ATCC 51196 / DSM 11244 / BCRC 80197 / JCM 7670 / NBRC 15755 / NCIMB 13165 / 161).